The sequence spans 105 residues: Meiotically up-regulated gene 52 protein (105 aa).

In terms of biological role, has a role in meiosis. The chain is Meiotically up-regulated gene 52 protein (mug52) from Schizosaccharomyces pombe (strain 972 / ATCC 24843) (Fission yeast).